Consider the following 142-residue polypeptide: Glutamate-rich protein 2 (142 aa).

Disordered stretches follow at residues 1–55 (MSKN…HAPL) and 104–142 (EKAQ…CEDG). A compositionally biased stretch (basic and acidic residues) spans 9–27 (EQEKNNEHCPEDINDKLSE). Residues 28–43 (STDDDGEDTSDEDKEE) show a composition bias toward acidic residues. The segment covering 44–53 (DSNPNKDTHA) has biased composition (basic and acidic residues). Residues 109 to 142 (LEEDDDESEEDNSESEGESTEDPSEESSDECEDG) show a composition bias toward acidic residues.

The polypeptide is Glutamate-rich protein 2 (ERICH2) (Bos taurus (Bovine)).